A 145-amino-acid polypeptide reads, in one-letter code: Copper transporter 4 (145 aa).

The next 2 helical transmembrane spans lie at Gly53–Ala73 and Tyr106–Gly126.

Belongs to the copper transporter (Ctr) (TC 1.A.56) family. SLC31A subfamily. As to expression, highly expressed in roots and at lower levels in leaves, stems and flowers.

Its subcellular location is the membrane. In terms of biological role, involved in the transport of copper. The chain is Copper transporter 4 (COPT4) from Arabidopsis thaliana (Mouse-ear cress).